The primary structure comprises 350 residues: Protein YIPF3 (350 aa).

Positions methionine 1–glycine 10 are enriched in low complexity. The tract at residues methionine 1–glycine 51 is disordered. Alanine 2 carries the post-translational modification N-acetylalanine. Residues alanine 2 to lysine 148 lie on the Cytoplasmic side of the membrane. A helical membrane pass occupies residues isoleucine 149–histidine 169. The Lumenal segment spans residues glycine 170–alanine 187. Residues isoleucine 188–leucine 208 traverse the membrane as a helical segment. Residues cysteine 209–threonine 214 lie on the Cytoplasmic side of the membrane. Residues methionine 215–tyrosine 237 form a helical membrane-spanning segment. Residues asparagine 238 to histidine 240 are Lumenal-facing. A helical transmembrane segment spans residues leucine 241–valine 263. The Cytoplasmic segment spans residues leucine 264–arginine 274. A helical transmembrane segment spans residues leucine 275 to alanine 295. The Lumenal segment spans residues tyrosine 296–histidine 350. O-linked (GalNAc...) threonine glycans are attached at residues threonine 333 and threonine 334. Asparagine 337 carries an N-linked (GlcNAc...) asparagine glycan. O-linked (GalNAc...) threonine glycosylation is found at threonine 339 and threonine 346.

It belongs to the YIP1 family. In terms of assembly, interacts with YIPF4 and YIPF5. In terms of processing, N-glycosylated in the ER (40 kDa form I), then O-glycosylated in the Golgi apparatus (46 kDa form II), the C-terminal lumenal region is later removed in the Golgi apparatus to produce a 36 kDa form III. O-glycosylated with core 1-like and core 2-like glycans. O-glycan heterogeneity at Thr-346: HexNAc (minor), HexHexNAc (major), Hex1HexNAc2 (minor), Hex2HexNAc2 (minor) and dHex1Hex2HexNAc2 (minor). In terms of tissue distribution, expressed by nucleated hematopoietic cells (at protein level).

Its subcellular location is the cell membrane. It is found in the cytoplasm. It localises to the golgi apparatus. The protein resides in the cis-Golgi network membrane. Functionally, involved in the maintenance of the Golgi structure. May play a role in hematopoiesis. The protein is Protein YIPF3 (YIPF3) of Homo sapiens (Human).